Reading from the N-terminus, the 1642-residue chain is Cortactin-binding protein 2 (1642 aa).

Disordered stretches follow at residues 1-27, 203-222, 366-433, 446-471, and 491-611; these read MATD…AEAA, KKKT…RSTE, IGAS…HPGL, GSNA…SPTS, and RFTS…PSID. Residues 119–276 are a coiled coil; that stretch reads RKMQERMSTQ…EQLKRGTDSK (158 aa). A compositionally biased stretch (polar residues) spans 385–394; it reads GPSTGSTADL. Over residues 395–407 the composition is skewed to low complexity; the sequence is TSSPTPVPSTVSP. Arginine 491 is subject to Asymmetric dimethylarginine. A compositionally biased stretch (pro residues) spans 497–506; that stretch reads AGAPPRPGAP. A compositionally biased stretch (polar residues) spans 576 to 586; it reads TVASPPSTLPQ. ANK repeat units lie at residues 702 to 732, 736 to 765, 769 to 798, 802 to 831, 835 to 864, and 904 to 934; these read GRPT…DINY, DGHS…QVNV, NGFT…NINH, GGQT…DRSV, DGWT…PAHG, and EGWT…EPER. The segment at 1440-1469 is disordered; that stretch reads ESGAWRKVSTSPRKKSGRFSSPTWNKPDLS. Serine 1513 carries the post-translational modification Phosphoserine. The interval 1546–1642 is disordered; sequence RRFDSSGNNP…NSRDLEPTQK (97 aa). Composition is skewed to polar residues over residues 1552–1563 and 1571–1588; these read GNNPVFSATVNN and KEVS…SNSK. Residues 1613 to 1627 are compositionally biased toward low complexity; sequence SQNTKRSSSSSNTRQ.

Interacts with CTTN/cortactin SH3 domain. Interacts with STRN, STRN4/zinedin and MOB4/phocein; this interactions mediate the association with the STRIPAK core complex and may regulate dendritic spine distribution of the STRIPAK complex in hippocampal neurons. Activation of glutamate receptors weakens the interaction with STRN and STRN4.

It localises to the cytoplasm. Its subcellular location is the cell cortex. It is found in the cell projection. The protein resides in the dendritic spine. In terms of biological role, regulates the dendritic spine distribution of CTTN/cortactin in hippocampal neurons, and thus controls dendritic spinogenesis and dendritic spine maintenance. Associates with the striatin-interacting phosphatase and kinase (STRIPAK) core complex to regulate dendritic spine distribution of the STRIPAK complex in hippocampal neurons. The protein is Cortactin-binding protein 2 (CTTNBP2) of Muntiacus reevesi (Reeves' muntjac).